The sequence spans 89 residues: MLINIGRLLMLCVWGFLILNLVHPFPRPLNIFVNVALIFTVLMHGMQLALLKSTLPKDGPQMTTAEKVRIFLFGVFELLAWQKKFKVKK.

This is an uncharacterized protein from Escherichia coli (strain K12).